A 314-amino-acid polypeptide reads, in one-letter code: N-myc-interactor (314 aa).

The segment at 1 to 24 (MDADKDNIKQACDERSAEMDDMRG) is disordered. Residue S16 is modified to Phosphoserine. Residues 31 to 65 (VHEIMSENKELDEEIKKLEAELQSDAREFQIKENV) adopt a coiled-coil conformation. NID domains follow at residues 104 to 193 (GQAL…GEVE) and 202 to 293 (RSAV…EVEV).

The protein belongs to the NMI family. In terms of assembly, interacts with MYCN and MYC, as well as with other transcription factors with a Zip, HLH or a HLH-Zip motif. Interacts with all STAT proteins except STAT2. Interacts with IRF7, the interaction is direct and leads to the inhibition of IRF7-mediated type I IFN production. Interacts (via coiled-coil domain) with TRIM21 (via the SPRY domain); the interaction leads to 'Lys-63'-linked ubiquitination of NMI. Interacts with IFI35; the interaction is direct and is facilitated by TRIM21. Interacts with TLR4; the interaction is direct and leads to NF-kappa-B activation. In terms of processing, may be ubiquitinated. Expressed in macrophages.

It localises to the cytoplasm. The protein localises to the nucleus. Its subcellular location is the secreted. In terms of biological role, acts as a signaling pathway regulator involved in innate immune system response. In response to interleukin 2/IL2 and interferon IFN-gamma/IFNG, interacts with signal transducer and activator of transcription/STAT which activate the transcription of downstream genes involved in a multitude of signals for development and homeostasis. Enhances the recruitment of CBP/p300 coactivators to STAT1 and STAT5, resulting in increased STAT1- and STAT5-dependent transcription. In response to interferon IFN-alpha, associates in a complex with transcriptional regulator IFI35 to regulate immune response; the complex formation prevents proteasome-mediated degradation of IFI35. In complex with IFI35, negatively regulates nuclear factor NF-kappa-B signaling by inhibiting the nuclear translocation, activation and transcription of NF-kappa-B subunit p65/RELA, resulting in the inhibition of endothelial cell proliferation, migration and re-endothelialization of injured arteries. Negatively regulates virus-triggered type I interferon/IFN production by inducing proteosome-dependent degradation of IRF7, a transcriptional regulator of type I IFN, thereby interfering with cellular antiviral responses. Beside its role as an intracellular signaling pathway regulator, also functions extracellularly as damage-associated molecular patterns (DAMPs) to promote inflammation, when actively released by macrophage to the extracellular space during cell injury or pathogen invasion. Macrophage-secreted NMI activates NF-kappa-B signaling in adjacent macrophages through Toll-like receptor 4/TLR4 binding and activation, thereby inducing NF-kappa-B translocation from the cytoplasm into the nucleus which promotes the release of pro-inflammatory cytokines. The sequence is that of N-myc-interactor from Mus musculus (Mouse).